The chain runs to 570 residues: Biotin biosynthesis bifunctional protein BioHC (570 aa).

The interval 1-29 (MTEVNVRAAATPEEKPFLNRTRHEPANPQ) is disordered. Residues 1-279 (MTEVNVRAAA…HISHPREVAT (279 aa)) form a carboxylesterase region. Basic and acidic residues predominate over residues 12–25 (PEEKPFLNRTRHEP). Residues tryptophan 41, 105–106 (SL), and 175–179 (FIALQ) contribute to the substrate site. Serine 105 acts as the Nucleophile in catalysis. Active-site residues include aspartate 239 and histidine 267. Residue histidine 267 participates in substrate binding. A malonyl-ACP O-methyltransferase region spans residues 280–570 (MINSFLRQQA…RKPLDESASA (291 aa)).

It in the N-terminal section; belongs to the AB hydrolase superfamily. Carboxylesterase BioH family. In the C-terminal section; belongs to the methyltransferase superfamily.

It catalyses the reaction a carboxylic ester + H2O = an alcohol + a carboxylate + H(+). The enzyme catalyses malonyl-[ACP] + S-adenosyl-L-methionine = malonyl-[ACP] methyl ester + S-adenosyl-L-homocysteine. It participates in cofactor biosynthesis; biotin biosynthesis. Functionally, converts the free carboxyl group of a malonyl-thioester to its methyl ester by transfer of a methyl group from S-adenosyl-L-methionine (SAM). It allows to synthesize pimeloyl-ACP via the fatty acid synthetic pathway. Its function is as follows. The physiological role of BioH is to remove the methyl group introduced by BioC when the pimeloyl moiety is complete. It allows to synthesize pimeloyl-ACP via the fatty acid synthetic pathway through the hydrolysis of the ester bonds of pimeloyl-ACP esters. The polypeptide is Biotin biosynthesis bifunctional protein BioHC (bioC) (Teredinibacter turnerae (strain ATCC 39867 / T7901)).